We begin with the raw amino-acid sequence, 465 residues long: Kynurenine 3-monooxygenase (465 aa).

Residues 1–26 are disordered; that stretch reads MSPGIVSQEVNGRQEPTEAARDERHG. Basic and acidic residues predominate over residues 15–25; the sequence is EPTEAARDERH. A run of 2 helical transmembrane segments spans residues 405-427 and 440-462; these read LLFRLFPGWIPLYNSVSFSSMPY and LLKRIFGATFLAAIVTGGAIYAQ.

This sequence belongs to the aromatic-ring hydroxylase family. KMO subfamily. FAD is required as a cofactor.

It localises to the mitochondrion. The protein resides in the membrane. It catalyses the reaction L-kynurenine + NADPH + O2 + H(+) = 3-hydroxy-L-kynurenine + NADP(+) + H2O. Its pathway is cofactor biosynthesis; NAD(+) biosynthesis; quinolinate from L-kynurenine: step 1/3. In terms of biological role, catalyzes the hydroxylation of L-kynurenine (L-Kyn) to form 3-hydroxy-L-kynurenine (L-3OHKyn). Required for synthesis of quinolinic acid. The chain is Kynurenine 3-monooxygenase from Drosophila melanogaster (Fruit fly).